A 437-amino-acid polypeptide reads, in one-letter code: Elongation factor 1-gamma (437 aa).

Ala-2 is modified (N-acetylalanine). In terms of domain architecture, GST N-terminal spans Ala-2–Ser-87. Residues Thr-88–Phe-216 form the GST C-terminal domain. Lys-147 and Lys-212 each carry N6-acetyllysine. The segment covering Phe-221–Ala-254 has biased composition (basic and acidic residues). Residues Phe-221–Gln-268 are disordered. Residue Lys-253 forms a Glycyl lysine isopeptide (Lys-Gly) (interchain with G-Cter in SUMO1) linkage. In terms of domain architecture, EF-1-gamma C-terminal spans Ala-276–Lys-437. A Glycyl lysine isopeptide (Lys-Gly) (interchain with G-Cter in SUMO2) cross-link involves residue Lys-285. The residue at position 401 (Lys-401) is an N6-acetyllysine. Lys-434 is subject to N6-acetyllysine; alternate. At Lys-434 the chain carries N6-malonyllysine; alternate.

In terms of assembly, EF-1 is composed of four subunits: alpha, beta, delta, and gamma.

Functionally, probably plays a role in anchoring the complex to other cellular components. The protein is Elongation factor 1-gamma (Eef1g) of Mus musculus (Mouse).